Reading from the N-terminus, the 227-residue chain is Protein FdhD (227 aa).

A Mo-bis(molybdopterin guanine dinucleotide)-binding site is contributed by Phe210–Lys215.

It belongs to the FdhD family.

The protein localises to the cytoplasm. In terms of biological role, required for formate dehydrogenase (FDH) activity. The chain is Protein FdhD from Methanocaldococcus jannaschii (strain ATCC 43067 / DSM 2661 / JAL-1 / JCM 10045 / NBRC 100440) (Methanococcus jannaschii).